The primary structure comprises 192 residues: Probable cobalt-precorrin-6B C(15)-methyltransferase (decarboxylating) (192 aa).

S-adenosyl-L-methionine-binding positions include threonine 20, glycine 44 to glycine 48, glutamate 68, and alanine 96.

It belongs to the methyltransferase superfamily. Archaeal-type CbiT family.

The enzyme catalyses Co-precorrin-6B + S-adenosyl-L-methionine = Co-precorrin-7 + S-adenosyl-L-homocysteine + CO2. It functions in the pathway cofactor biosynthesis; adenosylcobalamin biosynthesis; cob(II)yrinate a,c-diamide from sirohydrochlorin (anaerobic route): step 8/10. Catalyzes the methylation of C-15 in cobalt-precorrin-6B followed by the decarboxylation of C-12 to form cobalt-precorrin-7. In Sulfolobus acidocaldarius (strain ATCC 33909 / DSM 639 / JCM 8929 / NBRC 15157 / NCIMB 11770), this protein is Probable cobalt-precorrin-6B C(15)-methyltransferase (decarboxylating).